Reading from the N-terminus, the 295-residue chain is Small ribosomal subunit protein uS2B (295 aa).

At Ser2 the chain carries N-acetylserine. The interaction with PPP1R16B stretch occupies residues 54 to 113; that stretch reads TWEKLLLAARAIVAIENPADVSVISSRNTGQRAVLKFAAATGATPIAGRFTPGTFTNQIQ. Laminin-binding stretches follow at residues 161–180 and 205–229; these read IPCN…MLAR and RDPE…EFQG. Basic and acidic residues predominate over residues 218–227; sequence AEKAVTKEEF. Residues 218–242 are disordered; sequence AEKAVTKEEFQGEWTAPSPEFTATQ. [DE]-W-[ST] repeat units follow at residues 230-232, 247-249, 266-268, 275-277, and 293-295; these read EWT and DWS. A laminin-binding region spans residues 242–295; it reads QPEVADWSEGVQVPSVPIQQFPTEDWSAQPATEDWSAAPTAQATEWVGATTDWS. The segment at 266–295 is disordered; that stretch reads DWSAQPATEDWSAAPTAQATEWVGATTDWS.

This sequence belongs to the universal ribosomal protein uS2 family. In terms of assembly, monomer (37LRP) and homodimer (67LR). Component of the small ribosomal subunit. Mature ribosomes consist of a small (40S) and a large (60S) subunit. The 40S subunit contains about 33 different proteins and 1 molecule of RNA (18S). The 60S subunit contains about 49 different proteins and 3 molecules of RNA (28S, 5.8S and 5S). Interacts with RPS21. Interacts with several laminins including at least LAMB1. Interacts with MDK. The mature dimeric form interacts with PPP1R16B (via its fourth ankyrin repeat). Interacts with PPP1CA only in the presence of PPP1R16B. Acylated. Acylation may be a prerequisite for conversion of the monomeric 37 kDa laminin receptor precursor (37LRP) to the mature dimeric 67 kDa laminin receptor (67LR), and may provide a mechanism for membrane association. In terms of processing, cleaved by stromelysin-3 (ST3) at the cell surface. Cleavage by stromelysin-3 may be a mechanism to alter cell-extracellular matrix interactions.

The protein localises to the cell membrane. Its subcellular location is the cytoplasm. It is found in the nucleus. In terms of biological role, required for the assembly and/or stability of the 40S ribosomal subunit. Required for the processing of the 20S rRNA-precursor to mature 18S rRNA in a late step of the maturation of 40S ribosomal subunits. Also functions as a cell surface receptor for laminin. Plays a role in cell adhesion to the basement membrane and in the consequent activation of signaling transduction pathways. May play a role in cell fate determination and tissue morphogenesis. Also acts as a receptor for several other ligands, including the pathogenic prion protein, viruses, and bacteria. Acts as a PPP1R16B-dependent substrate of PPP1CA. This Homo sapiens (Human) protein is Small ribosomal subunit protein uS2B.